The sequence spans 90 residues: Acylphosphatase (90 aa).

In terms of domain architecture, Acylphosphatase-like spans 5–90 (CERFIVKGHV…YKPFRGFKIL (86 aa)). Residues Arg-20 and Asn-38 contribute to the active site.

This sequence belongs to the acylphosphatase family.

It carries out the reaction an acyl phosphate + H2O = a carboxylate + phosphate + H(+). This Vibrio parahaemolyticus serotype O3:K6 (strain RIMD 2210633) protein is Acylphosphatase (acyP).